The sequence spans 86 residues: MVTKEEILKKVQSIVSEQLGISKEQVLVDSHFTNDLGADSLDNVELVMAIEEEFNIVISDIDAEKISNVREAVEFIIDKINNKANA.

The Carrier domain occupies 5–80 (EEILKKVQSI…EAVEFIIDKI (76 aa)). Serine 40 carries the post-translational modification O-(pantetheine 4'-phosphoryl)serine.

It belongs to the acyl carrier protein (ACP) family. In terms of processing, 4'-phosphopantetheine is transferred from CoA to a specific serine of apo-ACP by AcpS. This modification is essential for activity because fatty acids are bound in thioester linkage to the sulfhydryl of the prosthetic group.

Its subcellular location is the plastid. It localises to the chloroplast. It participates in lipid metabolism; fatty acid biosynthesis. Functionally, carrier of the growing fatty acid chain in fatty acid biosynthesis. In Cyanidium caldarium (Red alga), this protein is Acyl carrier protein.